Consider the following 150-residue polypeptide: Probable host range protein 2 (150 aa).

It belongs to the orthopoxvirus OPG027 family.

Its function is as follows. Inhibits antiviral activity induced by type I interferons. Does not block signal transduction of IFN, but is important to counteract the host antiviral state induced by a pre-treatment with IFN. The chain is Probable host range protein 2 (OPG027) from Camelpox virus (strain M-96).